Here is an 89-residue protein sequence, read N- to C-terminus: Small ribosomal subunit protein uS15 (89 aa).

The protein belongs to the universal ribosomal protein uS15 family. In terms of assembly, part of the 30S ribosomal subunit. Forms a bridge to the 50S subunit in the 70S ribosome, contacting the 23S rRNA.

Functionally, one of the primary rRNA binding proteins, it binds directly to 16S rRNA where it helps nucleate assembly of the platform of the 30S subunit by binding and bridging several RNA helices of the 16S rRNA. Its function is as follows. Forms an intersubunit bridge (bridge B4) with the 23S rRNA of the 50S subunit in the ribosome. In Methylobacterium nodulans (strain LMG 21967 / CNCM I-2342 / ORS 2060), this protein is Small ribosomal subunit protein uS15.